Reading from the N-terminus, the 116-residue chain is Iron-sulfur cluster insertion protein ErpA (116 aa).

The iron-sulfur cluster site is built by cysteine 44, cysteine 108, and cysteine 110.

It belongs to the HesB/IscA family. Homodimer. It depends on iron-sulfur cluster as a cofactor.

In terms of biological role, required for insertion of 4Fe-4S clusters for at least IspG. The chain is Iron-sulfur cluster insertion protein ErpA from Pseudomonas fluorescens (strain Pf0-1).